The following is a 338-amino-acid chain: Anthranilate phosphoribosyltransferase (338 aa).

Residues glycine 80, 83–84, threonine 88, 90–93, 108–116, and serine 120 each bind 5-phospho-alpha-D-ribose 1-diphosphate; these read GD, NIST, and KHGNRSVSS. Glycine 80 contacts anthranilate. Serine 92 contributes to the Mg(2+) binding site. Asparagine 111 provides a ligand contact to anthranilate. An anthranilate-binding site is contributed by arginine 166. The Mg(2+) site is built by aspartate 225 and glutamate 226.

Belongs to the anthranilate phosphoribosyltransferase family. In terms of assembly, homodimer. Mg(2+) is required as a cofactor.

The enzyme catalyses N-(5-phospho-beta-D-ribosyl)anthranilate + diphosphate = 5-phospho-alpha-D-ribose 1-diphosphate + anthranilate. Its pathway is amino-acid biosynthesis; L-tryptophan biosynthesis; L-tryptophan from chorismate: step 2/5. Functionally, catalyzes the transfer of the phosphoribosyl group of 5-phosphorylribose-1-pyrophosphate (PRPP) to anthranilate to yield N-(5'-phosphoribosyl)-anthranilate (PRA). The polypeptide is Anthranilate phosphoribosyltransferase (Desulfatibacillum aliphaticivorans).